The chain runs to 342 residues: S-adenosylmethionine:tRNA ribosyltransferase-isomerase (342 aa).

The protein belongs to the QueA family. Monomer.

The protein resides in the cytoplasm. It carries out the reaction 7-aminomethyl-7-carbaguanosine(34) in tRNA + S-adenosyl-L-methionine = epoxyqueuosine(34) in tRNA + adenine + L-methionine + 2 H(+). It functions in the pathway tRNA modification; tRNA-queuosine biosynthesis. Transfers and isomerizes the ribose moiety from AdoMet to the 7-aminomethyl group of 7-deazaguanine (preQ1-tRNA) to give epoxyqueuosine (oQ-tRNA). The chain is S-adenosylmethionine:tRNA ribosyltransferase-isomerase from Listeria monocytogenes serotype 4b (strain CLIP80459).